A 225-amino-acid polypeptide reads, in one-letter code: 7-cyano-7-deazaguanine synthase (225 aa).

10 to 20 provides a ligand contact to ATP; it reads FSGGQDSTTLA. Zn(2+)-binding residues include cysteine 190, cysteine 205, cysteine 208, and cysteine 211.

Belongs to the QueC family. Zn(2+) is required as a cofactor.

It catalyses the reaction 7-carboxy-7-deazaguanine + NH4(+) + ATP = 7-cyano-7-deazaguanine + ADP + phosphate + H2O + H(+). Its pathway is purine metabolism; 7-cyano-7-deazaguanine biosynthesis. Its function is as follows. Catalyzes the ATP-dependent conversion of 7-carboxy-7-deazaguanine (CDG) to 7-cyano-7-deazaguanine (preQ(0)). The polypeptide is 7-cyano-7-deazaguanine synthase (Helicobacter acinonychis (strain Sheeba)).